Here is a 331-residue protein sequence, read N- to C-terminus: UDP-xylose and UDP-N-acetylglucosamine transporter (331 aa).

The next 10 membrane-spanning stretches (helical) occupy residues 5 to 25 (FAVTLVFVGCCSNVVFLELLV), 30 to 50 (GCGNIVTFAQFAFIALEGFIF), 59 to 79 (PQIPLSNYVIMVTMFFTVSVI), 92 to 112 (LHMIFRSGSLIANMILGIIIL), 122 to 142 (LSIVLVSVGIFICTIMSAKQV), 153 to 173 (GVYAFMHWLLGIAMLTFALLM), 201 to 221 (CLPLPGFLLLSTNIYNHAVLF), 238 to 260 (VMWFYLLMNVITQYVCIRGVFIL), 267 to 289 (LTVTLVVTLRKFLSLIISILYFQ), and 301 to 321 (AVVFLGTLLYTEVLSSIPAAF).

Belongs to the nucleotide-sugar transporter family. SLC35B subfamily.

Its subcellular location is the golgi apparatus membrane. Its function is as follows. Sugar transporter that specifically mediates the transport of UDP-xylose (UDP-Xyl) and UDP-N-acetylglucosamine (UDP-GlcNAc) from cytosol into Golgi. In Danio rerio (Zebrafish), this protein is UDP-xylose and UDP-N-acetylglucosamine transporter (slc35b4).